A 2357-amino-acid polypeptide reads, in one-letter code: Myosin-I heavy chain (2357 aa).

The Myosin motor domain maps to 13 to 688; sequence QPVEDMITLP…QYLKLEELRK (676 aa). An ATP-binding site is contributed by 106 to 113; it reads GESGAGKT. The interval 579–586 is actin-binding; it reads YVRCIKPN. The IQ domain occupies 691-720; that stretch reads LLKKVTLIQSVWRMYRCKKRYQQIRASAKI. Positions 787–891 form a coiled coil; the sequence is KRDRNARMLE…QDKNINELDD (105 aa). Residues 787-1076 are binding to talin A; that stretch reads KRDRNARMLE…PILGAPPPPP (290 aa). Disordered stretches follow at residues 797–852 and 974–1112; these read IQRE…EEEL and ASSF…NPQP. 2 stretches are compositionally biased toward low complexity: residues 1003–1025 and 1078–1106; these read NNNY…SDFS and TSDS…QSTN. One can recognise a MyTH4 1 domain in the interval 1155–1313; that stretch reads YQKSHIKSSL…PSVTELESIK (159 aa). In terms of domain architecture, FERM 1 spans 1318 to 1620; that stretch reads IFVRITATDG…EYSLYLRNNA (303 aa). The region spanning 1618–1678 is the SH3 domain; that stretch reads NNAKYARALK…PVDHVEILLS (61 aa). Residues 1686 to 1849 are disordered; sequence VHPVATLSPP…PSKRLTVSPA (164 aa). Pro residues predominate over residues 1706-1733; it reads TPPPPPSISDSMSPPPQVGMLPPPPPPS. Composition is skewed to low complexity over residues 1734 to 1746 and 1755 to 1770; these read VMGS…IPSL and SSNS…SPMM. The span at 1817-1828 shows a compositional bias: polar residues; it reads FRSSLRVSMLNT. Residues 1894 to 2051 form the MyTH4 2 domain; it reads FNKDPIKESL…PSATEIQSFR (158 aa). The FERM 2 domain occupies 2060 to 2357; it reads STCKIRFIDQ…ASVYQFYSSQ (298 aa).

The protein belongs to the TRAFAC class myosin-kinesin ATPase superfamily. Myosin family. In terms of assembly, monomer. Interacts with talA.

The protein resides in the cytoplasm. In terms of biological role, myosins are actin-based motor molecules with ATPase activity. Involved in the early steps of phagocytosis and adhesion. This is Myosin-I heavy chain (myoI) from Dictyostelium discoideum (Social amoeba).